We begin with the raw amino-acid sequence, 680 residues long: Pilus tip adhesin Cpa (680 aa).

A cross-link (isoglutamyl cysteine thioester (Cys-Gln)) is located at residues 62–211; sequence CFNLTKHFPS…IFQSSDKTFQ (150 aa). The disordered stretch occupies residues 217–236; sequence EYVPDTPPKPGEEPPAKTEK. A compositionally biased stretch (basic and acidic residues) spans 226-236; that stretch reads PGEEPPAKTEK. The isoaspartyl lysine isopeptide (Lys-Asp) cross-link spans 243–546; it reads KYAEGDYSKL…ELIDVISMED (304 aa). In terms of domain architecture, CNA-B spans 253–311; the sequence is LEGATLKLAQIEGSGFQEKIFDSNKSGEKVELPNGTYVLSELKPPQGYGVATPITFKVA. The isoglutamyl cysteine thioester (Cys-Gln) cross-link spans 374–526; sequence CFNADLHSPP…FFVPNSSRYQ (153 aa). The isoaspartyl lysine isopeptide (Lys-Asn) cross-link spans 562–667; the sequence is KTVTGTIADK…KEDETVAFEN (106 aa). Residues 672-676 carry the VPPTG sorting signal motif; sequence VPPTG. A Threonyl lysine isopeptide (Thr-Lys) (interchain with K-? in major pilin subunit) cross-link involves residue T675. A propeptide spans 676–680 (removed by sortase); that stretch reads GLTTD.

As to quaternary structure, monomer. In terms of processing, proteolytically processed and assembled in pili through a transpeptidation reaction catalyzed by a sortase, which leads to a covalent link between Cpa and a major pilin subunit.

The protein resides in the fimbrium. Functionally, component of the pilus tip. Can bind covalently, via its two reactive thioester bonds, to molecular targets from host cell surface and can thus mediate adhesion of the streptococcal pili to host cells. Lysine side chains or a carbohydrate with a free amine group might be candidates for Cpa binding. In vitro, can covalently bind to spermidine, but it is unlikely that spermidine is the natural target of Cpa. In Streptococcus pyogenes, this protein is Pilus tip adhesin Cpa (cpa).